A 194-amino-acid polypeptide reads, in one-letter code: uncharacterized protein (194 aa).

CBS domains lie at 13-72 (MSFP…PKDV) and 78-133 (MSKK…LLEI). An ACP-type MB domain is found at 159-192 (YINGICENCGYQGRVRLYQGRYLCDECIEEFEEK). Fe cation is bound by residues Cys-164, Cys-167, Cys-182, and Cys-185. Zn(2+) is bound by residues Cys-164, Cys-167, Cys-182, and Cys-185.

This is an uncharacterized protein from Methanocaldococcus jannaschii (strain ATCC 43067 / DSM 2661 / JAL-1 / JCM 10045 / NBRC 100440) (Methanococcus jannaschii).